A 483-amino-acid polypeptide reads, in one-letter code: MNLNLILKSLEYSFIKENKKEIEKIEYDSRKVKEGDLFVCIEGYATDGHKYAKKAYDNGAKVIVCEKDLEDLSYYKDCTIIKVSDSRKALAIMSSNYYGNPSKHIKIIGITGTNGKTTSTFMMKAILEKAGYKVGLLGTIANYIGNKKIESHRTTPESLELQKLFKDMVDEKVDYCVMEVSSHSLYLDRVYGVEFKEAIFTNLTQDHLDFHKTFENYFNSKLILFKNAQNSVINIDDSYGEKVLKKALGNKITYGVEKNCDLKAENLHMHSRGVEFDTIFKNEKETIALNIPGKYNIYNALGSIGACLLEGIPLKTIKEALEDMPSVPGRCEIVTKNYNLGYDVIVDYAHTPDGLENILNTAREFTKGRLISVYGCGGDRDRTKRPIMGKVGSNLSDIAIITSDNPRTEDPKLIIKDVLEGIERDNYIVVEGRRDAIRKAMEIAKENDVIVVAGKGHEDYQILKDKTIHFDEREVIEELIKEI.

S29 contributes to the UDP-N-acetyl-alpha-D-muramoyl-L-alanyl-D-glutamate binding site. 112–118 is a binding site for ATP; the sequence is GTNGKTT. Residues 154–155, S181, and R189 each bind UDP-N-acetyl-alpha-D-muramoyl-L-alanyl-D-glutamate; that span reads TT. N6-carboxylysine is present on K221. Residues R380, 404–407, G454, and E458 contribute to the meso-2,6-diaminopimelate site; that span reads DNPR. A Meso-diaminopimelate recognition motif motif is present at residues 404–407; it reads DNPR.

This sequence belongs to the MurCDEF family. MurE subfamily. Mg(2+) is required as a cofactor. Post-translationally, carboxylation is probably crucial for Mg(2+) binding and, consequently, for the gamma-phosphate positioning of ATP.

The protein localises to the cytoplasm. The enzyme catalyses UDP-N-acetyl-alpha-D-muramoyl-L-alanyl-D-glutamate + meso-2,6-diaminopimelate + ATP = UDP-N-acetyl-alpha-D-muramoyl-L-alanyl-gamma-D-glutamyl-meso-2,6-diaminopimelate + ADP + phosphate + H(+). The protein operates within cell wall biogenesis; peptidoglycan biosynthesis. Catalyzes the addition of meso-diaminopimelic acid to the nucleotide precursor UDP-N-acetylmuramoyl-L-alanyl-D-glutamate (UMAG) in the biosynthesis of bacterial cell-wall peptidoglycan. The protein is UDP-N-acetylmuramoyl-L-alanyl-D-glutamate--2,6-diaminopimelate ligase of Clostridium botulinum (strain ATCC 19397 / Type A).